The sequence spans 440 residues: L-gulonolactone oxidase (440 aa).

The 171-residue stretch at 17–187 (YGCSPEMYYQ…LTVTLQCVPQ (171 aa)) folds into the FAD-binding PCMH-type domain. Position 54 is a pros-8alpha-FAD histidine (histidine 54). Residues 251-273 (IGFYLLEFLLWTSTYLPRLVGWI) form a helical membrane-spanning segment.

This sequence belongs to the oxygen-dependent FAD-linked oxidoreductase family. It depends on FAD as a cofactor. In terms of tissue distribution, highly expressed in liver.

It localises to the microsome membrane. It is found in the endoplasmic reticulum membrane. It catalyses the reaction L-gulono-1,4-lactone + O2 = L-ascorbate + H2O2 + H(+). It participates in cofactor biosynthesis; L-ascorbate biosynthesis via UDP-alpha-D-glucuronate pathway; L-ascorbate from UDP-alpha-D-glucuronate: step 4/4. Functionally, oxidizes L-gulono-1,4-lactone to hydrogen peroxide and L-xylo-hexulonolactone which spontaneously isomerizes to L-ascorbate. The chain is L-gulonolactone oxidase (Gulo) from Mus musculus (Mouse).